We begin with the raw amino-acid sequence, 234 residues long: Purine nucleoside phosphorylase DeoD-type (234 aa).

Residue His4 coordinates a purine D-ribonucleoside. Phosphate-binding positions include Gly20, Arg24, Arg43, and 87-90; that span reads RVGT. Residues Glu162, 178-180, and 202-203 contribute to the a purine D-ribonucleoside site; these read EME and SD. The active-site Proton donor is the Asp203.

The protein belongs to the PNP/UDP phosphorylase family. As to quaternary structure, homohexamer; trimer of homodimers.

It carries out the reaction a purine D-ribonucleoside + phosphate = a purine nucleobase + alpha-D-ribose 1-phosphate. The enzyme catalyses a purine 2'-deoxy-D-ribonucleoside + phosphate = a purine nucleobase + 2-deoxy-alpha-D-ribose 1-phosphate. Its function is as follows. Catalyzes the reversible phosphorolytic breakdown of the N-glycosidic bond in the beta-(deoxy)ribonucleoside molecules, with the formation of the corresponding free purine bases and pentose-1-phosphate. The polypeptide is Purine nucleoside phosphorylase DeoD-type (Anoxybacillus flavithermus (strain DSM 21510 / WK1)).